A 477-amino-acid chain; its full sequence is Glycogen synthase (477 aa).

Lys-15 is an ADP-alpha-D-glucose binding site.

Belongs to the glycosyltransferase 1 family. Bacterial/plant glycogen synthase subfamily.

It catalyses the reaction [(1-&gt;4)-alpha-D-glucosyl](n) + ADP-alpha-D-glucose = [(1-&gt;4)-alpha-D-glucosyl](n+1) + ADP + H(+). It participates in glycan biosynthesis; glycogen biosynthesis. Synthesizes alpha-1,4-glucan chains using ADP-glucose. The protein is Glycogen synthase of Escherichia coli O139:H28 (strain E24377A / ETEC).